We begin with the raw amino-acid sequence, 136 residues long: UPF0225 protein Pnap_0466 (136 aa).

This sequence belongs to the UPF0225 family.

The chain is UPF0225 protein Pnap_0466 from Polaromonas naphthalenivorans (strain CJ2).